A 136-amino-acid polypeptide reads, in one-letter code: UPF0216 protein PYRAB16100 (136 aa).

It belongs to the UPF0216 family.

This Pyrococcus abyssi (strain GE5 / Orsay) protein is UPF0216 protein PYRAB16100.